The chain runs to 63 residues: ATPase inhibitor, mitochondrial (63 aa).

A disordered region spans residues 1–23; sequence TAGATGATRQDGSTDAFEKREKA. Positions 18–62 form a coiled coil; that stretch reads EKREKAQEDLYIRQHEKEQLEALKESLKKQKKSLDDLEBKIDDLT.

It belongs to the ATPase inhibitor family.

It localises to the mitochondrion. This protein forms a one-to-one complex with ATPase to inhibit the enzyme activity completely. The sequence is that of ATPase inhibitor, mitochondrial from Cyberlindnera jadinii (Torula yeast).